The chain runs to 840 residues: Homeobox-leucine zipper protein HOX9 (840 aa).

Disordered stretches follow at residues 1–26 (MAAA…AGMD) and 135–160 (NPSL…DASN). A compositionally biased stretch (gly residues) spans 12–21 (GSDGGGGGYD). A DNA-binding region (homeobox) is located at residues 26 to 89 (DSGKYVRYTP…NRRCRDKQRK (64 aa)). The stretch at 86-135 (KQRKEASRLQAVNRKLTAMNKLLMEENERLQKQVSQLVHENAYMKQQLQN) forms a coiled coil. The START domain occupies 157 to 385 (DASNPSGLLT…IAQETSGEVV (229 aa)).

Belongs to the HD-ZIP homeobox family. Class III subfamily. In terms of tissue distribution, expressed in seedlings, roots, stems, leaf sheaths and blades and panicles.

The protein localises to the nucleus. Probable transcription factor. The polypeptide is Homeobox-leucine zipper protein HOX9 (HOX9) (Oryza sativa subsp. japonica (Rice)).